A 229-amino-acid chain; its full sequence is tRNA (guanine-N(7)-)-methyltransferase (229 aa).

Residues Glu59, Glu84, Asp111, and Asp134 each coordinate S-adenosyl-L-methionine. Asp134 is an active-site residue. Substrate contacts are provided by residues Lys138, Asp170, and 205 to 208 (TKFE).

It belongs to the class I-like SAM-binding methyltransferase superfamily. TrmB family.

It carries out the reaction guanosine(46) in tRNA + S-adenosyl-L-methionine = N(7)-methylguanosine(46) in tRNA + S-adenosyl-L-homocysteine. It participates in tRNA modification; N(7)-methylguanine-tRNA biosynthesis. Its function is as follows. Catalyzes the formation of N(7)-methylguanine at position 46 (m7G46) in tRNA. This Nitrosospira multiformis (strain ATCC 25196 / NCIMB 11849 / C 71) protein is tRNA (guanine-N(7)-)-methyltransferase.